Reading from the N-terminus, the 187-residue chain is 1,6-anhydro-N-acetylmuramyl-L-alanine amidase AmpD (187 aa).

Residues 30-167 (LLVVHNISLP…APERKTDPGP (138 aa)) form the N-acetylmuramoyl-L-alanine amidase domain. A Zn(2+)-binding site is contributed by His-34. Glu-116 serves as the catalytic Proton acceptor. Positions 154 and 164 each coordinate Zn(2+).

Belongs to the N-acetylmuramoyl-L-alanine amidase 2 family. Zn(2+) is required as a cofactor.

The protein localises to the cytoplasm. It catalyses the reaction Hydrolyzes the link between N-acetylmuramoyl residues and L-amino acid residues in certain cell-wall glycopeptides.. Amidase activity is inhibited by metal chelators such as EDTA, dipicolinic acid or 1,10-phenanthroline. Involved in cell wall peptidoglycan recycling. Specifically cleaves the amide bond between the lactyl group of N-acetylmuramic acid and the alpha-amino group of the L-alanine in degradation products containing an anhydro N-acetylmuramyl moiety. Is also involved in beta-lactamase induction. In Citrobacter freundii, this protein is 1,6-anhydro-N-acetylmuramyl-L-alanine amidase AmpD.